A 419-amino-acid polypeptide reads, in one-letter code: Histidine--tRNA ligase (419 aa).

This sequence belongs to the class-II aminoacyl-tRNA synthetase family. Homodimer.

The protein localises to the cytoplasm. It catalyses the reaction tRNA(His) + L-histidine + ATP = L-histidyl-tRNA(His) + AMP + diphosphate + H(+). The protein is Histidine--tRNA ligase of Syntrophotalea carbinolica (strain DSM 2380 / NBRC 103641 / GraBd1) (Pelobacter carbinolicus).